We begin with the raw amino-acid sequence, 199 residues long: Phosphatidylethanolamine N-methyltransferase (199 aa).

Over Met-1–Glu-12 the chain is Lumenal. The helical intramembrane region spans Pro-13–Ala-33. At Arg-34–Ala-45 the chain is on the lumenal side. A helical membrane pass occupies residues Phe-46 to Leu-66. Over Arg-67–Gly-93 the chain is Cytoplasmic. A helical membrane pass occupies residues Leu-94 to Thr-114. Residue Gly-98–Gly-100 coordinates S-adenosyl-L-methionine. Over Gly-115 to His-157 the chain is Lumenal. The helical transmembrane segment at Ala-158–Leu-178 threads the bilayer. Residues Tyr-179–Ser-199 are Cytoplasmic-facing. Glu-180–Glu-181 contacts S-adenosyl-L-methionine.

Belongs to the class VI-like SAM-binding methyltransferase superfamily. PEMT/PEM2 methyltransferase family. As to expression, expressed in liver (at protein level).

It is found in the endoplasmic reticulum membrane. Its subcellular location is the mitochondrion membrane. It carries out the reaction a 1,2-diacyl-sn-glycero-3-phospho-N-methylethanolamine + S-adenosyl-L-methionine = a 1,2-diacyl-sn-glycero-3-phospho-N,N-dimethylethanolamine + S-adenosyl-L-homocysteine + H(+). The enzyme catalyses a 1,2-diacyl-sn-glycero-3-phospho-N,N-dimethylethanolamine + S-adenosyl-L-methionine = a 1,2-diacyl-sn-glycero-3-phosphocholine + S-adenosyl-L-homocysteine + H(+). The catalysed reaction is a 1,2-diacyl-sn-glycero-3-phosphoethanolamine + S-adenosyl-L-methionine = a 1,2-diacyl-sn-glycero-3-phospho-N-methylethanolamine + S-adenosyl-L-homocysteine + H(+). It catalyses the reaction 1,2-di-(9Z-octadecenoyl)-sn-glycero-3-phosphoethanolamine + S-adenosyl-L-methionine = 1,2-di-(9Z-octadecenoyl)-sn-glycero-3-phospho-N-methylethanolamine + S-adenosyl-L-homocysteine + H(+). It carries out the reaction 1,2-di-(9Z-octadecenoyl)-sn-glycero-3-phospho-N-methylethanolamine + S-adenosyl-L-methionine = 1,2-di-(9Z-octadecenoyl)-sn-glycero-3-phospho-N,N-dimethylethanolamine + S-adenosyl-L-homocysteine + H(+). The enzyme catalyses 1,2-di-(9Z-octadecenoyl)-sn-glycero-3-phospho-N,N-dimethylethanolamine + S-adenosyl-L-methionine = 1,2-di-(9Z-octadecenoyl)-sn-glycero-3-phosphocholine + S-adenosyl-L-homocysteine + H(+). The catalysed reaction is 1,2-di-(9Z,12Z-octadecadienoyl)-sn-glycero-3-phosphoethanolamine + S-adenosyl-L-methionine = 1,2-di-(9Z,12Z-octadecadienoyl)-sn-glycero-3-phospho-N-methylethanolamine + S-adenosyl-L-homocysteine + H(+). It catalyses the reaction 1,2-di-(9Z,12Z-octadecadienoyl)-sn-glycero-3-phospho-N-methylethanolamine + S-adenosyl-L-methionine = 1,2-di-(9Z,12Z-octadecadienoyl)-sn-glycero-3-phospho-N,N-dimethylethanolamine + S-adenosyl-L-homocysteine + H(+). It carries out the reaction 1,2-di-(9Z,12Z-octadecadienoyl)-sn-glycero-3-phospho-N,N-dimethylethanolamine + S-adenosyl-L-methionine = 1,2-di-(9Z,12Z-octadecadienoyl)-sn-glycero-3-phosphocholine + S-adenosyl-L-homocysteine + H(+). The enzyme catalyses 1,2-di-(9Z,12Z,15Z-octadecatrienoyl)-sn-glycero-3-phosphoethanolamine + S-adenosyl-L-methionine = 1,2-di-(9Z,12Z,15Z-octadecatrienoyl)-sn-glycero-3-phospho-N-methylethanolamine + S-adenosyl-L-homocysteine + H(+). The catalysed reaction is 1,2-di-(9Z,12Z,15Z-octadecatrienoyl)-sn-glycero-3-phospho-N-methylethanolamine + S-adenosyl-L-methionine = 1,2-di-(9Z,12Z,15Z-octadecatrienoyl)-sn-glycero-3-phospho-N,N-dimethylethanolamine + S-adenosyl-L-homocysteine + H(+). It catalyses the reaction 1,2-di-(9Z,12Z,15Z-octadecatrienoyl)-sn-glycero-3-phospho-N,N-dimethylethanolamine + S-adenosyl-L-methionine = 1,2-di-(9Z,12Z,15Z-octadecatrienoyl)-sn-glycero-3-phosphocholine + S-adenosyl-L-homocysteine + H(+). It carries out the reaction 1-hexadecanoyl-2-(4Z,7Z,10Z,13Z,16Z,19Z-docosahexaenoyl)-sn-glycero-3-phosphoethanolamine + S-adenosyl-L-methionine = 1-hexadecanoyl-2-(4Z,7Z,10Z,13Z,16Z,19Z-docosahexaenoyl)-sn-glycero-3-phospho-N-methylethanolamine + S-adenosyl-L-homocysteine + H(+). The enzyme catalyses 1-hexadecanoyl-2-(4Z,7Z,10Z,13Z,16Z,19Z-docosahexaenoyl)-sn-glycero-3-phospho-N-methylethanolamine + S-adenosyl-L-methionine = 1-hexadecanoyl-2-(4Z,7Z,10Z,13Z,16Z,19Z-docosahexaenoyl)-sn-glycero-3-phospho-N,N-dimethylethanolamine + S-adenosyl-L-homocysteine + H(+). The catalysed reaction is 1-hexadecanoyl-2-(4Z,7Z,10Z,13Z,16Z,19Z-docosahexaenoyl)-sn-glycero-3-phospho-N,N-dimethylethanolamine + S-adenosyl-L-methionine = 1-hexadecanoyl-2-(4Z,7Z,10Z,13Z,16Z,19Z-docosahexaenoyl)-sn-glycero-3-phosphocholine + S-adenosyl-L-homocysteine + H(+). Its pathway is phospholipid metabolism; phosphatidylcholine biosynthesis. Its function is as follows. Catalyzes the three sequential steps of the methylation pathway for the biosynthesis of phosphatidylcholine, a critical and essential component for membrane structure. Uses S-adenosylmethionine (S-adenosyl-L-methionine, SAM or AdoMet) as the methyl group donor for the methylation of phosphatidylethanolamine (1,2-diacyl-sn-glycero-3-phosphoethanolamine, PE) to phosphatidylmonomethylethanolamine (1,2-diacyl-sn-glycero-3-phospho-N-methylethanolamine, PMME), PMME to phosphatidyldimethylethanolamine (1,2-diacyl-sn-glycero-3-phospho-N,N-dimethylethanolamine, PDME), and PDME to phosphatidylcholine (1,2-diacyl-sn-glycero-3-phosphocholine, PC), producing S-adenosyl-L-homocysteine in each step. This Mus musculus (Mouse) protein is Phosphatidylethanolamine N-methyltransferase.